The following is a 700-amino-acid chain: uncharacterized protein (700 aa).

A run of 9 helical transmembrane segments spans residues V24 to F44, L67 to K87, V89 to G109, L115 to V135, L139 to I159, L383 to V403, V420 to G440, Y461 to L481, and L491 to Q511.

The protein belongs to the YccS/YhfK family.

Its subcellular location is the cell membrane. This is an uncharacterized protein from Escherichia coli (strain K12).